We begin with the raw amino-acid sequence, 1349 residues long: Zinc finger protein 804B (1349 aa).

The segment at 55 to 79 (FYCELCDKQYHKHQEFDNHINSYDH) adopts a C2H2-type zinc-finger fold. A disordered region spans residues 985-1010 (YASESRNDQDSAIPRTTEKDKSKSSH).

The chain is Zinc finger protein 804B (ZNF804B) from Homo sapiens (Human).